A 332-amino-acid chain; its full sequence is tRNA U34 carboxymethyltransferase (332 aa).

Carboxy-S-adenosyl-L-methionine-binding positions include lysine 96, tryptophan 110, lysine 115, glycine 135, 186–187 (LE), methionine 204, tyrosine 208, and arginine 323.

The protein belongs to the class I-like SAM-binding methyltransferase superfamily. CmoB family. In terms of assembly, homotetramer.

The catalysed reaction is carboxy-S-adenosyl-L-methionine + 5-hydroxyuridine(34) in tRNA = 5-carboxymethoxyuridine(34) in tRNA + S-adenosyl-L-homocysteine + H(+). Its function is as follows. Catalyzes carboxymethyl transfer from carboxy-S-adenosyl-L-methionine (Cx-SAM) to 5-hydroxyuridine (ho5U) to form 5-carboxymethoxyuridine (cmo5U) at position 34 in tRNAs. This is tRNA U34 carboxymethyltransferase from Hydrogenovibrio crunogenus (strain DSM 25203 / XCL-2) (Thiomicrospira crunogena).